A 192-amino-acid chain; its full sequence is Ion-translocating oxidoreductase complex subunit A (192 aa).

A run of 6 helical transmembrane segments spans residues 5-25 (LLLL…FLGL), 39-59 (IGMS…SYLV), 65-85 (LPFD…AVVV), 102-122 (ALGI…VALL), 134-154 (AIYG…FSAM), and 171-191 (AIAM…TGLV).

It belongs to the NqrDE/RnfAE family. In terms of assembly, the complex is composed of six subunits: RnfA, RnfB, RnfC, RnfD, RnfE and RnfG.

It is found in the cell inner membrane. Functionally, part of a membrane-bound complex that couples electron transfer with translocation of ions across the membrane. The chain is Ion-translocating oxidoreductase complex subunit A from Shewanella oneidensis (strain ATCC 700550 / JCM 31522 / CIP 106686 / LMG 19005 / NCIMB 14063 / MR-1).